Here is a 425-residue protein sequence, read N- to C-terminus: Serine--tRNA ligase (425 aa).

227–229 (TAE) contacts L-serine. ATP-binding positions include 258-260 (RRE) and Val274. Glu281 is an L-serine binding site. ATP is bound at residue 347–350 (ETHS). Residue Thr382 coordinates L-serine.

This sequence belongs to the class-II aminoacyl-tRNA synthetase family. Type-1 seryl-tRNA synthetase subfamily. In terms of assembly, homodimer. The tRNA molecule binds across the dimer.

The protein resides in the cytoplasm. It catalyses the reaction tRNA(Ser) + L-serine + ATP = L-seryl-tRNA(Ser) + AMP + diphosphate + H(+). The enzyme catalyses tRNA(Sec) + L-serine + ATP = L-seryl-tRNA(Sec) + AMP + diphosphate + H(+). The protein operates within aminoacyl-tRNA biosynthesis; selenocysteinyl-tRNA(Sec) biosynthesis; L-seryl-tRNA(Sec) from L-serine and tRNA(Sec): step 1/1. Its function is as follows. Catalyzes the attachment of serine to tRNA(Ser). Is also able to aminoacylate tRNA(Sec) with serine, to form the misacylated tRNA L-seryl-tRNA(Sec), which will be further converted into selenocysteinyl-tRNA(Sec). The chain is Serine--tRNA ligase from Deinococcus radiodurans (strain ATCC 13939 / DSM 20539 / JCM 16871 / CCUG 27074 / LMG 4051 / NBRC 15346 / NCIMB 9279 / VKM B-1422 / R1).